The sequence spans 89 residues: Small ribosomal subunit protein uS15 (89 aa).

It belongs to the universal ribosomal protein uS15 family. Part of the 30S ribosomal subunit. Forms a bridge to the 50S subunit in the 70S ribosome, contacting the 23S rRNA.

One of the primary rRNA binding proteins, it binds directly to 16S rRNA where it helps nucleate assembly of the platform of the 30S subunit by binding and bridging several RNA helices of the 16S rRNA. Its function is as follows. Forms an intersubunit bridge (bridge B4) with the 23S rRNA of the 50S subunit in the ribosome. This is Small ribosomal subunit protein uS15 from Corynebacterium kroppenstedtii (strain DSM 44385 / JCM 11950 / CIP 105744 / CCUG 35717).